We begin with the raw amino-acid sequence, 454 residues long: Bifunctional protein GlmU (454 aa).

The tract at residues 1-227 (MTQLSVVILA…FMEVEGANNR (227 aa)) is pyrophosphorylase. UDP-N-acetyl-alpha-D-glucosamine is bound by residues 9-12 (LAAG), K23, Q74, 79-80 (GT), 101-103 (YGD), G138, E152, N167, and N225. D103 contributes to the Mg(2+) binding site. N225 is a Mg(2+) binding site. Residues 228-248 (LQLAALERFYQKTQAEKLLLA) form a linker region. An N-acetyltransferase region spans residues 249–454 (GVRLIDQARF…QGWQRPTKKK (206 aa)). R331 and K349 together coordinate UDP-N-acetyl-alpha-D-glucosamine. The active-site Proton acceptor is the H361. The UDP-N-acetyl-alpha-D-glucosamine site is built by Y364 and N375. Residues A378, 384-385 (NY), S403, A421, and R438 contribute to the acetyl-CoA site.

This sequence in the N-terminal section; belongs to the N-acetylglucosamine-1-phosphate uridyltransferase family. It in the C-terminal section; belongs to the transferase hexapeptide repeat family. Homotrimer. Mg(2+) serves as cofactor.

It localises to the cytoplasm. It catalyses the reaction alpha-D-glucosamine 1-phosphate + acetyl-CoA = N-acetyl-alpha-D-glucosamine 1-phosphate + CoA + H(+). It carries out the reaction N-acetyl-alpha-D-glucosamine 1-phosphate + UTP + H(+) = UDP-N-acetyl-alpha-D-glucosamine + diphosphate. The protein operates within nucleotide-sugar biosynthesis; UDP-N-acetyl-alpha-D-glucosamine biosynthesis; N-acetyl-alpha-D-glucosamine 1-phosphate from alpha-D-glucosamine 6-phosphate (route II): step 2/2. It functions in the pathway nucleotide-sugar biosynthesis; UDP-N-acetyl-alpha-D-glucosamine biosynthesis; UDP-N-acetyl-alpha-D-glucosamine from N-acetyl-alpha-D-glucosamine 1-phosphate: step 1/1. Its pathway is bacterial outer membrane biogenesis; LPS lipid A biosynthesis. Catalyzes the last two sequential reactions in the de novo biosynthetic pathway for UDP-N-acetylglucosamine (UDP-GlcNAc). The C-terminal domain catalyzes the transfer of acetyl group from acetyl coenzyme A to glucosamine-1-phosphate (GlcN-1-P) to produce N-acetylglucosamine-1-phosphate (GlcNAc-1-P), which is converted into UDP-GlcNAc by the transfer of uridine 5-monophosphate (from uridine 5-triphosphate), a reaction catalyzed by the N-terminal domain. The sequence is that of Bifunctional protein GlmU from Actinobacillus pleuropneumoniae serotype 7 (strain AP76).